We begin with the raw amino-acid sequence, 450 residues long: MNEILNTKDINVIGEFFIETWGCQMNEEDSEKLSGMLKKEGYIRTEERENADVIIFNTCCVRENAELKVYGNLGILKGLKSKNPNLIIAVTGCMMQQKGMAETIKKKFPFVDIIIGTHNLHNFPNYLNEVKKKDTSVLKIQEKENSIIENMPIDRKNSMKAFVTIMYGCNNFCTYCIVPYVRGRERSRTPENIEAEIKKLISEGYKEITLLGQNVNSYGKDLEPNVTFAELLKRVNNIEGLERVRFMTSHPKDLTDDVIEAIAKCDKLCEQIHLPVQSGSSEILKKMNRHYDREKYLDVVSKIKKLIPNVALSTDIIVGFPGETEKDFEETLSLVKEVEYDSAFTFLYSIRKGTPAAKFEDQVPEDVKHKRFNRLVEVLNEISAKKNKAYEGKIEEVLVEGTSKNDENKLMGRTRTGKLVNFIGDKDSIGELVNVKIIKANSFSLTGEEI.

Positions glycine 14–lysine 132 constitute an MTTase N-terminal domain. [4Fe-4S] cluster contacts are provided by cysteine 23, cysteine 59, cysteine 93, cysteine 169, cysteine 173, and cysteine 176. Residues arginine 155 to lysine 385 form the Radical SAM core domain. Residues lysine 388–isoleucine 450 form the TRAM domain.

This sequence belongs to the methylthiotransferase family. MiaB subfamily. Monomer. It depends on [4Fe-4S] cluster as a cofactor.

The protein resides in the cytoplasm. The catalysed reaction is N(6)-dimethylallyladenosine(37) in tRNA + (sulfur carrier)-SH + AH2 + 2 S-adenosyl-L-methionine = 2-methylsulfanyl-N(6)-dimethylallyladenosine(37) in tRNA + (sulfur carrier)-H + 5'-deoxyadenosine + L-methionine + A + S-adenosyl-L-homocysteine + 2 H(+). Functionally, catalyzes the methylthiolation of N6-(dimethylallyl)adenosine (i(6)A), leading to the formation of 2-methylthio-N6-(dimethylallyl)adenosine (ms(2)i(6)A) at position 37 in tRNAs that read codons beginning with uridine. This is tRNA-2-methylthio-N(6)-dimethylallyladenosine synthase from Clostridium botulinum (strain ATCC 19397 / Type A).